Reading from the N-terminus, the 252-residue chain is tRNA pseudouridine synthase A (252 aa).

Catalysis depends on Asp52, which acts as the Nucleophile. A substrate-binding site is contributed by Tyr112.

Belongs to the tRNA pseudouridine synthase TruA family. As to quaternary structure, homodimer.

The enzyme catalyses uridine(38/39/40) in tRNA = pseudouridine(38/39/40) in tRNA. In terms of biological role, formation of pseudouridine at positions 38, 39 and 40 in the anticodon stem and loop of transfer RNAs. The chain is tRNA pseudouridine synthase A from Porphyromonas gingivalis (strain ATCC 33277 / DSM 20709 / CIP 103683 / JCM 12257 / NCTC 11834 / 2561).